The chain runs to 435 residues: D-amino acid dehydrogenase (435 aa).

3-17 is a binding site for FAD; sequence VLILGSGVIGTTSAW.

The protein belongs to the DadA oxidoreductase family. FAD serves as cofactor.

It catalyses the reaction a D-alpha-amino acid + A + H2O = a 2-oxocarboxylate + AH2 + NH4(+). Its pathway is amino-acid degradation; D-alanine degradation; NH(3) and pyruvate from D-alanine: step 1/1. Oxidative deamination of D-amino acids. This chain is D-amino acid dehydrogenase, found in Xylella fastidiosa (strain M23).